Reading from the N-terminus, the 212-residue chain is phospholipase A2 inhibitor and Ly6/PLAUR domain-containing protein (212 aa).

The first 24 residues, 1–24, serve as a signal peptide directing secretion; that stretch reads MILFRRHRTFLLAFTLLCTLLGLG. In terms of domain architecture, UPAR/Ly6 spans 27-117; it reads LTCEVCKGSG…NSGSVPPPLN (91 aa). Cystine bridges form between Cys-29–Cys-53, Cys-32–Cys-39, Cys-46–Cys-74, Cys-80–Cys-101, Cys-102–Cys-107, Cys-126–Cys-152, and Cys-145–Cys-173.

The protein belongs to the CNF-like-inhibitor family.

It localises to the secreted. This Mus musculus (Mouse) protein is phospholipase A2 inhibitor and Ly6/PLAUR domain-containing protein (Pinlyp).